Reading from the N-terminus, the 308-residue chain is Elongation factor Ts (308 aa).

The interval 80–83 (TDFV) is involved in Mg(2+) ion dislocation from EF-Tu.

The protein belongs to the EF-Ts family.

Its subcellular location is the cytoplasm. In terms of biological role, associates with the EF-Tu.GDP complex and induces the exchange of GDP to GTP. It remains bound to the aminoacyl-tRNA.EF-Tu.GTP complex up to the GTP hydrolysis stage on the ribosome. This Allorhizobium ampelinum (strain ATCC BAA-846 / DSM 112012 / S4) (Agrobacterium vitis (strain S4)) protein is Elongation factor Ts.